A 329-amino-acid polypeptide reads, in one-letter code: Cytosolic arginine sensor for mTORC1 subunit 1 (329 aa).

Position 14 is a phosphoserine; by PKB/AKT1 (Ser-14). ACT domains follow at residues 72-138 (AEAT…HTLA) and 260-321 (GELW…EVLQ). Residues 111–112 (SV), Gly-274, 280–281 (IV), and 300–304 (TFNFD) contribute to the L-arginine site.

It belongs to the GATS family. As to quaternary structure, forms homodimers and heterodimers with CASTOR2. Interacts with the GATOR2 complex which is composed of MIOS, SEC13, SEH1L, WDR24 and WDR59; the interaction is negatively regulated by arginine. Interacts with TM4SF5; the interaction is positively regulated by leucine and is negatively regulated by arginine. Post-translationally, phosphorylation at Ser-14 by AKT1, promoting the interaction between CASTOR1 and RNF167. In terms of processing, ubiquitinated by RNF167 via 'Lys-29'-polyubiquitination, leading to its degradation, releasing the GATOR2 complex. Ubiquitination by RNF167 is promoted by phosphorylation at Ser-14 by AKT1. As to expression, widely expressed.

The protein resides in the cytoplasm. It localises to the cytosol. Functions as an intracellular arginine sensor within the amino acid-sensing branch of the TORC1 signaling pathway. As a homodimer or a heterodimer with CASTOR2, binds and inhibits the GATOR subcomplex GATOR2 and thereby mTORC1. Binding of arginine to CASTOR1 allosterically disrupts the interaction of CASTOR1-containing dimers with GATOR2 which can in turn activate mTORC1 and the TORC1 signaling pathway. This is Cytosolic arginine sensor for mTORC1 subunit 1 from Homo sapiens (Human).